The chain runs to 317 residues: Protein-L-isoaspartate O-methyltransferase (317 aa).

Residue Ser-59 is part of the active site.

It belongs to the methyltransferase superfamily. L-isoaspartyl/D-aspartyl protein methyltransferase family. In terms of assembly, monomer.

It localises to the cytoplasm. It carries out the reaction [protein]-L-isoaspartate + S-adenosyl-L-methionine = [protein]-L-isoaspartate alpha-methyl ester + S-adenosyl-L-homocysteine. Its function is as follows. Catalyzes the methyl esterification of L-isoaspartyl residues in peptides and proteins that result from spontaneous decomposition of normal L-aspartyl and L-asparaginyl residues. It plays a role in the repair and/or degradation of damaged proteins. The sequence is that of Protein-L-isoaspartate O-methyltransferase (pcm) from Thermotoga maritima (strain ATCC 43589 / DSM 3109 / JCM 10099 / NBRC 100826 / MSB8).